We begin with the raw amino-acid sequence, 61 residues long: Cobrotoxin-c (61 aa).

4 cysteine pairs are disulfide-bonded: C3-C23, C17-C40, C42-C53, and C54-C59.

It belongs to the three-finger toxin family. Short-chain subfamily. Type I alpha-neurotoxin sub-subfamily. In terms of tissue distribution, expressed by the venom gland.

The protein resides in the secreted. In terms of biological role, produces peripheral paralysis by blocking neuromuscular transmission at the postsynaptic site. Binds to the nicotinic acetylcholine receptor. This chain is Cobrotoxin-c, found in Naja kaouthia (Monocled cobra).